Reading from the N-terminus, the 227-residue chain is Transmembrane emp24 domain-containing protein 1 (227 aa).

Positions 1 to 23 (MMAAGAALALALWLLMPPVEVGG) are cleaved as a signal peptide. The Extracellular segment spans residues 24–194 (AGPPPIQDGE…LQEGNLERVN (171 aa)). Residues 43 to 125 (KQCFYQSAPA…EKLVFFELIF (83 aa)) form the GOLD domain. A coiled-coil region spans residues 145 to 170 (EMLDVKMEDIKESIETMRTRLERSIQ). Residues 195 to 215 (FWSAVNVAVLLLVAVLQVCTL) traverse the membrane as a helical segment. The Cytoplasmic segment spans residues 216-227 (KRFFQDKRPVPT). Positions 218-219 (FF) match the COPII vesicle coat-binding motif. Residues 218–227 (FFQDKRPVPT) carry the COPI vesicle coat-binding motif.

It belongs to the EMP24/GP25L family. In terms of assembly, homodimer in endoplasmic reticulum, endoplasmic reticulum-Golgi intermediate compartment and cis-Golgi network. Interacts with IL1RL1. Interacts with RNF26; this interaction is important to modulate innate immune signaling through the cGAS-STING pathway. In terms of tissue distribution, widely expressed.

It localises to the cell membrane. The protein resides in the endoplasmic reticulum membrane. The protein localises to the golgi apparatus. It is found in the cis-Golgi network membrane. Its subcellular location is the endoplasmic reticulum-Golgi intermediate compartment membrane. Potential role in vesicular protein trafficking, mainly in the early secretory pathway. May act as a cargo receptor at the lumenal side for incorporation of secretory cargo molecules into transport vesicles and may be involved in vesicle coat formation at the cytoplasmic side. Plays a positive role in IL-33-mediated IL-8 and IL-6 production by interacting with interleukin-33 receptor IL1RL1. Also plays a role in the modulation of innate immune signaling through the cGAS-STING pathway by interacting with RNF26. The protein is Transmembrane emp24 domain-containing protein 1 (TMED1) of Homo sapiens (Human).